Here is a 1589-residue protein sequence, read N- to C-terminus: Pentafunctional AROM polypeptide (1589 aa).

A 3-dehydroquinate synthase region spans residues 1 to 384 (MAAPTTIKIL…HEQQASVVSN (384 aa)). NAD(+) contacts are provided by residues 44-46 (DTT), 81-84 (ELSK), 114-116 (GGV), and Asp119. Residue Arg130 coordinates 7-phospho-2-dehydro-3-deoxy-D-arabino-heptonate. An NAD(+)-binding site is contributed by 139–140 (TT). 7-phospho-2-dehydro-3-deoxy-D-arabino-heptonate-binding residues include Asp146 and Lys152. NAD(+) is bound at residue Lys161. Residue Asn162 coordinates 7-phospho-2-dehydro-3-deoxy-D-arabino-heptonate. Residues 179–182 (FLNT) and Asn190 each bind NAD(+). Glu194 is a Zn(2+) binding site. 7-phospho-2-dehydro-3-deoxy-D-arabino-heptonate-binding positions include 194–197 (EVIK) and Lys250. Glu260 (proton acceptor; for 3-dehydroquinate synthase activity) is an active-site residue. 7-phospho-2-dehydro-3-deoxy-D-arabino-heptonate contacts are provided by residues 264–268 (RNLLN) and His271. His271 contacts Zn(2+). His275 (proton acceptor; for 3-dehydroquinate synthase activity) is an active-site residue. 7-phospho-2-dehydro-3-deoxy-D-arabino-heptonate contacts are provided by His287 and Lys356. Residue His287 participates in Zn(2+) binding. Positions 397 to 841 (VSPGVPKSLQ…WDTLAQLFKA (445 aa)) are EPSP synthase. Cys823 serves as the catalytic For EPSP synthase activity. The shikimate kinase stretch occupies residues 861-1052 (ASIFIIGMRG…KKKPQSFFVS (192 aa)). 867-874 (GMRGAGKT) is a binding site for ATP. The segment at 1053–1273 (LTLPDLRPSA…AAPGQLSAQD (221 aa)) is 3-dehydroquinase. Residue His1176 is the Proton acceptor; for 3-dehydroquinate dehydratase activity of the active site. The active-site Schiff-base intermediate with substrate; for 3-dehydroquinate dehydratase activity is the Lys1204. Residues 1286 to 1589 (PRKFAIFGKP…VMNPGTDNRG (304 aa)) are shikimate dehydrogenase.

The protein in the N-terminal section; belongs to the sugar phosphate cyclases superfamily. Dehydroquinate synthase family. In the 2nd section; belongs to the EPSP synthase family. This sequence in the 3rd section; belongs to the shikimate kinase family. It in the 4th section; belongs to the type-I 3-dehydroquinase family. The protein in the C-terminal section; belongs to the shikimate dehydrogenase family. As to quaternary structure, homodimer. It depends on Zn(2+) as a cofactor.

It is found in the cytoplasm. It carries out the reaction 7-phospho-2-dehydro-3-deoxy-D-arabino-heptonate = 3-dehydroquinate + phosphate. The enzyme catalyses 3-dehydroquinate = 3-dehydroshikimate + H2O. It catalyses the reaction shikimate + NADP(+) = 3-dehydroshikimate + NADPH + H(+). The catalysed reaction is shikimate + ATP = 3-phosphoshikimate + ADP + H(+). It carries out the reaction 3-phosphoshikimate + phosphoenolpyruvate = 5-O-(1-carboxyvinyl)-3-phosphoshikimate + phosphate. It participates in metabolic intermediate biosynthesis; chorismate biosynthesis; chorismate from D-erythrose 4-phosphate and phosphoenolpyruvate: step 2/7. Its pathway is metabolic intermediate biosynthesis; chorismate biosynthesis; chorismate from D-erythrose 4-phosphate and phosphoenolpyruvate: step 3/7. It functions in the pathway metabolic intermediate biosynthesis; chorismate biosynthesis; chorismate from D-erythrose 4-phosphate and phosphoenolpyruvate: step 4/7. The protein operates within metabolic intermediate biosynthesis; chorismate biosynthesis; chorismate from D-erythrose 4-phosphate and phosphoenolpyruvate: step 5/7. It participates in metabolic intermediate biosynthesis; chorismate biosynthesis; chorismate from D-erythrose 4-phosphate and phosphoenolpyruvate: step 6/7. The AROM polypeptide catalyzes 5 consecutive enzymatic reactions in prechorismate polyaromatic amino acid biosynthesis. This is Pentafunctional AROM polypeptide from Coccidioides posadasii (strain C735) (Valley fever fungus).